Consider the following 232-residue polypeptide: Ubiquinone biosynthesis O-methyltransferase (232 aa).

S-adenosyl-L-methionine contacts are provided by Arg36, Gly55, Asp76, and Leu120.

Belongs to the methyltransferase superfamily. UbiG/COQ3 family.

It carries out the reaction a 3-demethylubiquinol + S-adenosyl-L-methionine = a ubiquinol + S-adenosyl-L-homocysteine + H(+). The enzyme catalyses a 3-(all-trans-polyprenyl)benzene-1,2-diol + S-adenosyl-L-methionine = a 2-methoxy-6-(all-trans-polyprenyl)phenol + S-adenosyl-L-homocysteine + H(+). It participates in cofactor biosynthesis; ubiquinone biosynthesis. Functionally, O-methyltransferase that catalyzes the 2 O-methylation steps in the ubiquinone biosynthetic pathway. This is Ubiquinone biosynthesis O-methyltransferase from Pseudomonas aeruginosa (strain LESB58).